A 228-amino-acid chain; its full sequence is 2,3-bisphosphoglycerate-dependent phosphoglycerate mutase (228 aa).

Substrate-binding positions include 7–14 (RHGESAWN), 20–21 (TG), R59, 86–89 (ERHY), K97, 113–114 (RR), and 182–183 (GN). The active-site Tele-phosphohistidine intermediate is H8. E86 functions as the Proton donor/acceptor in the catalytic mechanism.

It belongs to the phosphoglycerate mutase family. BPG-dependent PGAM subfamily.

It carries out the reaction (2R)-2-phosphoglycerate = (2R)-3-phosphoglycerate. The protein operates within carbohydrate degradation; glycolysis; pyruvate from D-glyceraldehyde 3-phosphate: step 3/5. In terms of biological role, catalyzes the interconversion of 2-phosphoglycerate and 3-phosphoglycerate. The polypeptide is 2,3-bisphosphoglycerate-dependent phosphoglycerate mutase (Fusobacterium nucleatum subsp. nucleatum (strain ATCC 25586 / DSM 15643 / BCRC 10681 / CIP 101130 / JCM 8532 / KCTC 2640 / LMG 13131 / VPI 4355)).